We begin with the raw amino-acid sequence, 66 residues long: MQTGKVKWFNGEKGFGFIEVEGGEDVFVHFSAIQGDGFKTLEEGQEVSFEIVDGNRGPQAANVTKN.

Positions 4-63 (GKVKWFNGEKGFGFIEVEGGEDVFVHFSAIQGDGFKTLEEGQEVSFEIVDGNRGPQAANV) constitute a CSD domain.

Homodimer.

It is found in the cytoplasm. The sequence is that of Cold shock-like protein CspD (cspD) from Bacillus cereus.